Consider the following 329-residue polypeptide: Phenylalanine--tRNA ligase alpha subunit (329 aa).

Residue E253 participates in Mg(2+) binding.

It belongs to the class-II aminoacyl-tRNA synthetase family. Phe-tRNA synthetase alpha subunit type 1 subfamily. In terms of assembly, tetramer of two alpha and two beta subunits. It depends on Mg(2+) as a cofactor.

Its subcellular location is the cytoplasm. It catalyses the reaction tRNA(Phe) + L-phenylalanine + ATP = L-phenylalanyl-tRNA(Phe) + AMP + diphosphate + H(+). In Coxiella burnetii (strain CbuK_Q154) (Coxiella burnetii (strain Q154)), this protein is Phenylalanine--tRNA ligase alpha subunit.